Here is a 359-residue protein sequence, read N- to C-terminus: DNA-directed RNA polymerase subunit alpha (359 aa).

The interval 1–226 (MLISQRPSLA…ELFGLARELN (226 aa)) is alpha N-terminal domain (alpha-NTD). Positions 241-359 (ADTIAAYAMP…GQDYAETEQL (119 aa)) are alpha C-terminal domain (alpha-CTD). Residues 315–359 (FDPSAAAAEYPSEGWASETETVGGLGRVEDNGYDDGQDYAETEQL) form a disordered region. Acidic residues predominate over residues 345–359 (NGYDDGQDYAETEQL).

It belongs to the RNA polymerase alpha chain family. As to quaternary structure, homodimer. The RNAP catalytic core consists of 2 alpha, 1 beta, 1 beta' and 1 omega subunit. When a sigma factor is associated with the core the holoenzyme is formed, which can initiate transcription.

The enzyme catalyses RNA(n) + a ribonucleoside 5'-triphosphate = RNA(n+1) + diphosphate. In terms of biological role, DNA-dependent RNA polymerase catalyzes the transcription of DNA into RNA using the four ribonucleoside triphosphates as substrates. In Saccharopolyspora erythraea (strain ATCC 11635 / DSM 40517 / JCM 4748 / NBRC 13426 / NCIMB 8594 / NRRL 2338), this protein is DNA-directed RNA polymerase subunit alpha.